The primary structure comprises 618 residues: Glycine--tRNA ligase 2 (618 aa).

Glutamate 187 provides a ligand contact to glycine. Residues 219–221 and 230–231 each bind ATP; these read RNE and RV. Glutamate 238 serves as a coordination point for glycine. 347 to 348 is a binding site for ATP; that stretch reads EC. 466–468 is a glycine binding site; it reads EPS. Arginine 473 lines the ATP pocket.

It belongs to the class-II aminoacyl-tRNA synthetase family. In terms of assembly, homodimer.

Its subcellular location is the cytoplasm. The enzyme catalyses tRNA(Gly) + glycine + ATP = glycyl-tRNA(Gly) + AMP + diphosphate. It catalyses the reaction 2 ATP + H(+) = P(1),P(4)-bis(5'-adenosyl) tetraphosphate + diphosphate. In terms of biological role, catalyzes the ATP-dependent ligation of glycine to the 3'-end of its cognate tRNA, via the formation of an aminoacyl-adenylate intermediate (Gly-AMP). Also produces diadenosine tetraphosphate (Ap4A), a universal pleiotropic signaling molecule needed for cell regulation pathways, by direct condensation of 2 ATPs. Thereby, may play a special role in Ap4A homeostasis. This Saccharomyces cerevisiae (strain ATCC 204508 / S288c) (Baker's yeast) protein is Glycine--tRNA ligase 2 (GRS2).